Reading from the N-terminus, the 220-residue chain is Large ribosomal subunit protein uL3 (220 aa).

The disordered stretch occupies residues 113–143; sequence GTTKGHGYQGNIHKDGQRRGPMAHGSRYHRR.

It belongs to the universal ribosomal protein uL3 family. In terms of assembly, part of the 50S ribosomal subunit. Forms a cluster with proteins L14 and L19.

In terms of biological role, one of the primary rRNA binding proteins, it binds directly near the 3'-end of the 23S rRNA, where it nucleates assembly of the 50S subunit. This Limosilactobacillus fermentum (strain NBRC 3956 / LMG 18251) (Lactobacillus fermentum) protein is Large ribosomal subunit protein uL3.